Consider the following 144-residue polypeptide: 3-hydroxyacyl-[acyl-carrier-protein] dehydratase FabZ (144 aa).

Residue histidine 48 is part of the active site.

It belongs to the thioester dehydratase family. FabZ subfamily.

It localises to the cytoplasm. The catalysed reaction is a (3R)-hydroxyacyl-[ACP] = a (2E)-enoyl-[ACP] + H2O. Its function is as follows. Involved in unsaturated fatty acids biosynthesis. Catalyzes the dehydration of short chain beta-hydroxyacyl-ACPs and long chain saturated and unsaturated beta-hydroxyacyl-ACPs. In Bacillus thuringiensis (strain Al Hakam), this protein is 3-hydroxyacyl-[acyl-carrier-protein] dehydratase FabZ.